The sequence spans 312 residues: Apolipoprotein E (312 aa).

Residues 1-18 form the signal peptide; sequence MKALWAVLLATLLTGCLA. 8 tandem repeats follow at residues 72-93, 94-115, 116-137, 138-159, 160-181, 182-203, 204-225, and 226-247. The tract at residues 72–247 is 8 X 22 AA approximate tandem repeats; that stretch reads VLMEDTMTEV…RLEEMREHME (176 aa). M135 bears the Methionine sulfoxide mark. The LDL and other lipoprotein receptors binding stretch occupies residues 150–160; it reads HLRKMRKRLMR. The LDL receptor binding stretch occupies residues 150 to 160; the sequence is HLRKMRKRLMR. 154 to 157 serves as a coordination point for heparin; it reads MRKR. Residues 202 to 282 are lipid-binding and lipoprotein association; that stretch reads TANLGAGAAQ…SWFEPLVEDM (81 aa). Residue 221-228 participates in heparin binding; that stretch reads SERLRGRL. A homooligomerization region spans residues 258-312; it reads QQIRLQAEIFQARLKSWFEPLVEDMHRQLANLVEKIQSSVATNSVLSTSVPQENQ. Positions 270-282 are specificity for association with VLDL; it reads RLKSWFEPLVEDM.

The protein belongs to the apolipoprotein A1/A4/E family. Homotetramer. May interact with ABCA1; functionally associated with ABCA1 in the biogenesis of HDLs. May interact with APP/A4 amyloid-beta peptide; the interaction is extremely stable in vitro but its physiological significance is unclear. May interact with MAPT. May interact with MAP2. In the cerebrospinal fluid, interacts with secreted SORL1. Interacts with PMEL; this allows the loading of PMEL luminal fragment on ILVs to induce fibril nucleation. APOE exists as multiple glycosylated and sialylated glycoforms within cells and in plasma. The extent of glycosylation and sialylation are tissue and context specific. In terms of processing, glycated in plasma VLDL. Post-translationally, phosphorylated by FAM20C in the extracellular medium.

Its subcellular location is the secreted. The protein resides in the extracellular space. It localises to the extracellular matrix. It is found in the extracellular vesicle. The protein localises to the endosome. Its subcellular location is the multivesicular body. APOE is an apolipoprotein, a protein associating with lipid particles, that mainly functions in lipoprotein-mediated lipid transport between organs via the plasma and interstitial fluids. APOE is a core component of plasma lipoproteins and is involved in their production, conversion and clearance. Apolipoproteins are amphipathic molecules that interact both with lipids of the lipoprotein particle core and the aqueous environment of the plasma. As such, APOE associates with chylomicrons, chylomicron remnants, very low density lipoproteins (VLDL) and intermediate density lipoproteins (IDL) but shows a preferential binding to high-density lipoproteins (HDL). It also binds a wide range of cellular receptors including the LDL receptor/LDLR, the LDL receptor-related proteins LRP1, LRP2 and LRP8 and the very low-density lipoprotein receptor/VLDLR that mediate the cellular uptake of the APOE-containing lipoprotein particles. Finally, APOE also has a heparin-binding activity and binds heparan-sulfate proteoglycans on the surface of cells, a property that supports the capture and the receptor-mediated uptake of APOE-containing lipoproteins by cells. A main function of APOE is to mediate lipoprotein clearance through the uptake of chylomicrons, VLDLs, and HDLs by hepatocytes. APOE is also involved in the biosynthesis by the liver of VLDLs as well as their uptake by peripheral tissues ensuring the delivery of triglycerides and energy storage in muscle, heart and adipose tissues. By participating in the lipoprotein-mediated distribution of lipids among tissues, APOE plays a critical role in plasma and tissues lipid homeostasis. APOE is also involved in two steps of reverse cholesterol transport, the HDLs-mediated transport of cholesterol from peripheral tissues to the liver, and thereby plays an important role in cholesterol homeostasis. First, it is functionally associated with ABCA1 in the biogenesis of HDLs in tissues. Second, it is enriched in circulating HDLs and mediates their uptake by hepatocytes. APOE also plays an important role in lipid transport in the central nervous system, regulating neuron survival and sprouting. The sequence is that of Apolipoprotein E (Apoe) from Arvicanthis niloticus (African grass rat).